Here is a 211-residue protein sequence, read N- to C-terminus: LexA repressor (211 aa).

The segment at residues 27-47 (QTEIARAFGFKGVRAAQYHLE) is a DNA-binding region (H-T-H motif). Active-site for autocatalytic cleavage activity residues include S131 and K168.

It belongs to the peptidase S24 family. Homodimer.

It carries out the reaction Hydrolysis of Ala-|-Gly bond in repressor LexA.. Its function is as follows. Represses a number of genes involved in the response to DNA damage (SOS response), including recA and lexA. In the presence of single-stranded DNA, RecA interacts with LexA causing an autocatalytic cleavage which disrupts the DNA-binding part of LexA, leading to derepression of the SOS regulon and eventually DNA repair. This chain is LexA repressor, found in Stenotrophomonas maltophilia (strain R551-3).